The primary structure comprises 305 residues: Glycine--tRNA ligase alpha subunit (305 aa).

It belongs to the class-II aminoacyl-tRNA synthetase family. In terms of assembly, tetramer of two alpha and two beta subunits.

Its subcellular location is the cytoplasm. It catalyses the reaction tRNA(Gly) + glycine + ATP = glycyl-tRNA(Gly) + AMP + diphosphate. The sequence is that of Glycine--tRNA ligase alpha subunit from Vibrio vulnificus (strain CMCP6).